Here is a 303-residue protein sequence, read N- to C-terminus: Probable endonuclease 4 (303 aa).

Residues His78, His118, Glu154, Asp188, His191, His222, Asp235, His237, and Glu267 each contribute to the Zn(2+) site.

The protein belongs to the AP endonuclease 2 family. Zn(2+) is required as a cofactor.

It carries out the reaction Endonucleolytic cleavage to 5'-phosphooligonucleotide end-products.. Functionally, endonuclease IV plays a role in DNA repair. It cleaves phosphodiester bonds at apurinic or apyrimidinic (AP) sites, generating a 3'-hydroxyl group and a 5'-terminal sugar phosphate. The chain is Probable endonuclease 4 from Mycoplasmoides gallisepticum (strain R(low / passage 15 / clone 2)) (Mycoplasma gallisepticum).